A 205-amino-acid chain; its full sequence is Ras-related protein rab-6.1 (205 aa).

Residues 18–25, threonine 43, 66–70, and 124–127 contribute to the GTP site; these read GEQSVGKT, DTAGQ, and NKTD. Residues cysteine 203 and cysteine 205 are each lipidated (S-geranylgeranyl cysteine). Cysteine methyl ester is present on cysteine 205.

Belongs to the small GTPase superfamily. Rab family. In terms of assembly, interacts with GARP complex component vps-52. Highly expressed in body wall muscle, intestine, somatic gonad, distal tip cells, vulva, and neurons including AVB, AVD, RIG, and PVC (at protein level). Not expressed in AVA and RMDV neurons.

It is found in the cell membrane. Its subcellular location is the cell projection. It localises to the dendrite. The protein localises to the perikaryon. The protein resides in the golgi apparatus. It is found in the cytoplasmic vesicle. Its subcellular location is the secretory vesicle. Its function is as follows. The small GTPases Rab are key regulators of intracellular membrane trafficking, from the formation of transport vesicles to their fusion with membranes. Rabs cycle between an inactive GDP-bound form and an active GTP-bound form that is able to recruit to membranes different set of downstream effectors directly responsible for vesicle formation, movement, tethering and fusion. In its active GTP-bound form, acts redundantly with rab-6.2 (in its active GTP-bound form) to positively regulate the retrograde trafficking of cargo molecules from endosomes to Golgi structures. Required for the retrograde trafficking of glr-1, a subunit of AMPA-type glutamate receptors (AMPRs), out of early endosomes and into the Golgi compartment in neurons. Together with rab-6.2, promotes the retrograde trafficking of mig-14 from endosomes to Golgi structures in the intestine. In oocytes, in its active GTP-bound form, involved in the membrane fusion and exocytosis of secretory vesicles (cortical granules) to play a role in the remodeling of the embryo surface following fertilization. Recruits sep-1 to cortical granules (derived from the Golgi complex) for exocytosis during the oocyte-to-embryo transition. Required for seam cell division and alae formation. Promotes spontaneous reversals in locomotion. The protein is Ras-related protein rab-6.1 of Caenorhabditis elegans.